Here is a 302-residue protein sequence, read N- to C-terminus: AP-1 complex-associated regulatory protein (302 aa).

At Ser-29 the chain carries Phosphoserine. The segment at Asp-78–His-138 is interaction with AP1G1. Positions Ile-80–His-138 form a coiled coil. A compositionally biased stretch (polar residues) spans Cys-188–Leu-206. The segment at Cys-188 to Leu-258 is disordered. Residues Gly-199–Gly-215 form a sufficient for association with the Arp2/3 complex region. Positions Pro-221 to Leu-233 are enriched in basic and acidic residues. Ser-226 is subject to Phosphoserine. Thr-228 is modified (phosphothreonine). Residues Lys-242–Ser-255 are compositionally biased toward polar residues.

As to quaternary structure, interacts (via coiled-coil domain) with AP1G1 (via GAE domain). Interacts with KIF5B. Associates with the Arp2/3 complex. In terms of processing, palmitoylated.

It localises to the golgi apparatus. The protein localises to the trans-Golgi network. It is found in the late endosome. Its subcellular location is the early endosome. Functionally, necessary for adaptor protein complex 1 (AP-1)-dependent transport between the trans-Golgi network and endosomes. Regulates the membrane association of AP1G1/gamma1-adaptin, one of the subunits of the AP-1 adaptor complex. The direct interaction with AP1G1/gamma1-adaptin attenuates the release of the AP-1 complex from membranes. Regulates endosomal membrane traffic via association with AP-1 and KIF5B thus linking kinesin-based plus-end-directed microtubular transport to AP-1-dependent membrane traffic. May act as effector of AP-1 in calcium-induced endo-lysosome secretion. Inhibits Arp2/3 complex function; negatively regulates cell spreading, size and motility via intracellular sequestration of the Arp2/3 complex. The polypeptide is AP-1 complex-associated regulatory protein (AP1AR) (Homo sapiens (Human)).